Here is a 383-residue protein sequence, read N- to C-terminus: Acetylornithine deacetylase (383 aa).

H80 contacts Zn(2+). Residue D82 is part of the active site. Residue D112 coordinates Zn(2+). The active site involves E144. Residues E145, E169, and H355 each coordinate Zn(2+).

Belongs to the peptidase M20A family. ArgE subfamily. In terms of assembly, homodimer. Zn(2+) is required as a cofactor. The cofactor is Co(2+). It depends on glutathione as a cofactor.

It localises to the cytoplasm. The enzyme catalyses N(2)-acetyl-L-ornithine + H2O = L-ornithine + acetate. It participates in amino-acid biosynthesis; L-arginine biosynthesis; L-ornithine from N(2)-acetyl-L-ornithine (linear): step 1/1. Its function is as follows. Catalyzes the hydrolysis of the amide bond of N(2)-acetylated L-amino acids. Cleaves the acetyl group from N-acetyl-L-ornithine to form L-ornithine, an intermediate in L-arginine biosynthesis pathway, and a branchpoint in the synthesis of polyamines. This Salmonella typhi protein is Acetylornithine deacetylase.